A 416-amino-acid polypeptide reads, in one-letter code: Imidazolonepropionase (416 aa).

His81 and His83 together coordinate Fe(3+). Positions 81 and 83 each coordinate Zn(2+). Arg90, Tyr153, and His186 together coordinate 4-imidazolone-5-propanoate. Tyr153 is a binding site for N-formimidoyl-L-glutamate. His251 is a binding site for Fe(3+). His251 contacts Zn(2+). Residue Gln254 coordinates 4-imidazolone-5-propanoate. A Fe(3+)-binding site is contributed by Asp326. Asp326 is a Zn(2+) binding site. Residues Asn328 and Gly330 each coordinate N-formimidoyl-L-glutamate. 4-imidazolone-5-propanoate is bound at residue Thr331.

This sequence belongs to the metallo-dependent hydrolases superfamily. HutI family. Requires Zn(2+) as cofactor. The cofactor is Fe(3+).

Its subcellular location is the cytoplasm. It catalyses the reaction 4-imidazolone-5-propanoate + H2O = N-formimidoyl-L-glutamate. Its pathway is amino-acid degradation; L-histidine degradation into L-glutamate; N-formimidoyl-L-glutamate from L-histidine: step 3/3. Its function is as follows. Catalyzes the hydrolytic cleavage of the carbon-nitrogen bond in imidazolone-5-propanoate to yield N-formimidoyl-L-glutamate. It is the third step in the universal histidine degradation pathway. The protein is Imidazolonepropionase of Paracidovorax citrulli (strain AAC00-1) (Acidovorax citrulli).